The sequence spans 184 residues: MILMKDIVRDGDPVLRQVAQKLTFPLSDHYRKLADDMMEYLVNSQDPKIAAKHQLRAGVGLAAPQVGEGVSMAALLVPDDKGEIIFKEVYVNPEIISESVRKTCLSEGEGCLSVDKVIDGYVPRPNKVTVHYWTVDGEEKTIRLKGYPAIVSGHEIDHLNGHLFYDRINKENPFALDEDTIVIY.

Fe cation contacts are provided by cysteine 111 and histidine 154. The active site involves glutamate 155. Fe cation is bound at residue histidine 158.

This sequence belongs to the polypeptide deformylase family. Fe(2+) serves as cofactor.

The catalysed reaction is N-terminal N-formyl-L-methionyl-[peptide] + H2O = N-terminal L-methionyl-[peptide] + formate. Its function is as follows. Removes the formyl group from the N-terminal Met of newly synthesized proteins. Requires at least a dipeptide for an efficient rate of reaction. N-terminal L-methionine is a prerequisite for activity but the enzyme has broad specificity at other positions. In Lactobacillus delbrueckii subsp. bulgaricus (strain ATCC 11842 / DSM 20081 / BCRC 10696 / JCM 1002 / NBRC 13953 / NCIMB 11778 / NCTC 12712 / WDCM 00102 / Lb 14), this protein is Peptide deformylase.